The sequence spans 529 residues: Cytochrome P450 monooxygenase 45 (529 aa).

A helical membrane pass occupies residues 24–44 (VLTICILALLTFVLREIVLYF). Residues asparagine 185 and asparagine 322 are each glycosylated (N-linked (GlcNAc...) asparagine). Cysteine 454 is a heme binding site.

Belongs to the cytochrome P450 family. Heme is required as a cofactor.

Its subcellular location is the membrane. Its pathway is secondary metabolite biosynthesis. Functionally, cytochrome P450 monooxygenase that is able to use trans-stilbene as a substrate for oxidation. This is Cytochrome P450 monooxygenase 45 from Postia placenta (strain ATCC 44394 / Madison 698-R) (Brown rot fungus).